The primary structure comprises 94 residues: Small ribosomal subunit protein bS18 (94 aa).

Polar residues predominate over residues 1–11 (MANERPTSQQR). Residues 1 to 24 (MANERPTSQQRPAGGPRKRRPFQR) are disordered.

The protein belongs to the bacterial ribosomal protein bS18 family. Part of the 30S ribosomal subunit. Forms a tight heterodimer with protein bS6.

Binds as a heterodimer with protein bS6 to the central domain of the 16S rRNA, where it helps stabilize the platform of the 30S subunit. The protein is Small ribosomal subunit protein bS18 of Pelobacter propionicus (strain DSM 2379 / NBRC 103807 / OttBd1).